A 225-amino-acid polypeptide reads, in one-letter code: UPF0758 protein Shew185_0376 (225 aa).

The 123-residue stretch at 102-224 (VLTNPDLTRD…IVSFAERGWI (123 aa)) folds into the MPN domain. Residues H173, H175, and D186 each coordinate Zn(2+). Positions 173–186 (HNHPSGNAEPSQAD) match the JAMM motif motif.

Belongs to the UPF0758 family.

The polypeptide is UPF0758 protein Shew185_0376 (Shewanella baltica (strain OS185)).